We begin with the raw amino-acid sequence, 169 residues long: Peptide deformylase (169 aa).

Fe cation-binding residues include Cys91 and His133. Residue Glu134 is part of the active site. Fe cation is bound at residue His137.

Belongs to the polypeptide deformylase family. It depends on Fe(2+) as a cofactor.

The enzyme catalyses N-terminal N-formyl-L-methionyl-[peptide] + H2O = N-terminal L-methionyl-[peptide] + formate. Removes the formyl group from the N-terminal Met of newly synthesized proteins. Requires at least a dipeptide for an efficient rate of reaction. N-terminal L-methionine is a prerequisite for activity but the enzyme has broad specificity at other positions. The sequence is that of Peptide deformylase from Salmonella arizonae (strain ATCC BAA-731 / CDC346-86 / RSK2980).